A 250-amino-acid polypeptide reads, in one-letter code: Triosephosphate isomerase (250 aa).

A substrate-binding site is contributed by Asn-9–Lys-11. His-94 serves as the catalytic Electrophile. Catalysis depends on Glu-166, which acts as the Proton acceptor. Substrate is bound by residues Gly-172, Ser-212, and Gly-233 to Gly-234.

This sequence belongs to the triosephosphate isomerase family. In terms of assembly, homodimer.

The protein localises to the cytoplasm. It catalyses the reaction D-glyceraldehyde 3-phosphate = dihydroxyacetone phosphate. Its pathway is carbohydrate biosynthesis; gluconeogenesis. The protein operates within carbohydrate degradation; glycolysis; D-glyceraldehyde 3-phosphate from glycerone phosphate: step 1/1. Functionally, involved in the gluconeogenesis. Catalyzes stereospecifically the conversion of dihydroxyacetone phosphate (DHAP) to D-glyceraldehyde-3-phosphate (G3P). The protein is Triosephosphate isomerase of Thermus thermophilus (strain ATCC 27634 / DSM 579 / HB8).